A 259-amino-acid polypeptide reads, in one-letter code: MLIVVSPAKTLDYETPLPTSAFTQPDFISDSAELIKACRTLTPVDIAKLMKVSDKIASLNAVRFEEWSTTFTQENARPALFAFKGDVYTGLDANSLSESEIEYAQTNLRMLSGLYGLLKPLDLMQPYRLEMGTKLENGRGSNLYQFWGSLITNKLNQELEAQGSETLVNLASNEYFKSVKPKELKADIVTPVFKDCKNGQYKIISFYAKKARGLMARFIIQNKISNVEELKSFDSDGYYFVEAESTATTLVFKREEQNK.

It belongs to the UPF0246 family.

This chain is UPF0246 protein VF_2109, found in Aliivibrio fischeri (strain ATCC 700601 / ES114) (Vibrio fischeri).